A 659-amino-acid polypeptide reads, in one-letter code: RNA-binding E3 ubiquitin-protein ligase MEX3C (659 aa).

The segment covering Met1 to Pro15 has biased composition (low complexity). The interval Met1–Ser140 is disordered. Residues Ala16–Gly37 show a composition bias toward pro residues. Positions Glu64–Arg82 are enriched in low complexity. A compositionally biased stretch (basic and acidic residues) spans Arg83–Pro94. Ser88 bears the Phosphoserine mark. Residues Ala104 to Asp137 are compositionally biased toward acidic residues. KH domains lie at Thr232 to Ile293 and Gln326 to Ile387. The segment at Phe513 to Asn569 is disordered. The span at Pro526–Leu544 shows a compositional bias: polar residues. Residues Ser537 and Ser545 each carry the phosphoserine modification. Over residues Ser551 to Ser562 the composition is skewed to basic and acidic residues. Residues Cys608–Gln648 form an RING-type zinc finger.

Interacts with USP7, which antagonizes the ability to degrade mRNA. In terms of tissue distribution, highest levels found in fetal brain and testis. Also expressed in thymus, salivary gland and uterus. Highly expressed in cells of the innate immune system, in particular activated NK cells. Week expression in the intestine.

The protein resides in the cytoplasm. Its subcellular location is the nucleus. The catalysed reaction is S-ubiquitinyl-[E2 ubiquitin-conjugating enzyme]-L-cysteine + [acceptor protein]-L-lysine = [E2 ubiquitin-conjugating enzyme]-L-cysteine + N(6)-ubiquitinyl-[acceptor protein]-L-lysine.. E3 ubiquitin ligase responsible for the post-transcriptional regulation of common HLA-A allotypes. Binds to the 3' UTR of HLA-A2 mRNA, and regulates its levels by promoting mRNA decay. RNA binding is sufficient to prevent translation, but ubiquitin ligase activity is required for mRNA degradation. The chain is RNA-binding E3 ubiquitin-protein ligase MEX3C (MEX3C) from Homo sapiens (Human).